A 183-amino-acid chain; its full sequence is Endoribonuclease YbeY (183 aa).

Zn(2+)-binding residues include His143, His147, and His153.

Belongs to the endoribonuclease YbeY family. It depends on Zn(2+) as a cofactor.

Its subcellular location is the cytoplasm. Single strand-specific metallo-endoribonuclease involved in late-stage 70S ribosome quality control and in maturation of the 3' terminus of the 16S rRNA. This chain is Endoribonuclease YbeY, found in Rickettsia bellii (strain RML369-C).